We begin with the raw amino-acid sequence, 758 residues long: MDPGGLKHSKDKGLAFGKLSESSVEGSFSGDTGGSKSTTSTSLMHLPGSRPQPPARDSANGLNVTTTQMELSTGGLTIEEAEVKVMEKAIRMQQPQKPQQNQQLFENFALLEASIADLNRSNTPGSSVLGRPHDLFSLKTENFSPMDKDRLDMGSVSFGQSQKDLDVNERLLGDNTMDILQDLDLPGSLSDLNEFYVSDEAAFLSSLSVEDVLLEDGNMETKPIDCSNGGNCTNVDSADQQKQLLEAGVSMPVIKTEEDADTSFIQLCTPGVIKQENDRRSFCQISSLDLPSTHNSAGSISGPSYPYGANTSTAVSLQQDQKPVFGLYPPLPSVSDSWNRGNGYATGSGMSSSSFPVGFSSPKARPEASGSASSAPAKPSGPTHKICLVCSDEASGCHYGVLTCGSCKVFFKRAVEGWRARQNTDGQHNYLCAGRNDCIIDKIRRKNCPACRFRKCLQAGMNLEARKNKKLIRLKGQQTTMEPNPPPPDERACALIPKSMPQLVPTMLSLLKAIEPEAIYSGYDSTIPDTSTRLMTTLNRLGGQQVVSAVKWAKSLPGFRNLHLDDQMTLLQCSWLFLMSFGLGWRSYQQCNGGMLCFAPDLVINDERMKLPYMTDQCEQMLKISTEFVRLQVSYDEYLCMKVLLLLSTVPKDGLKSQAVFDEIRMTYIKELGKAIVKREENSSQNWQRFYQLTKLLDSMQEMVGGLLQICFYTFVNKSLSVEFPEMLAEIISNQLPKFKDGSVKPLLFHALNHDTMP.

2 disordered regions span residues methionine 1–glycine 61 and glycine 349–proline 382. Residues methionine 1 to isoleucine 386 form a modulating region. Residues glycine 26–serine 42 are compositionally biased toward low complexity. 2 consecutive NR C4-type zinc fingers follow at residues cysteine 387–cysteine 407 and cysteine 432–cysteine 456. Positions cysteine 387–methionine 461 form a DNA-binding region, nuclear receptor. Residues asparagine 462–lysine 498 are hinge. The region spanning serine 499–serine 733 is the NR LBD domain.

Belongs to the nuclear hormone receptor family. NR3 subfamily. As to quaternary structure, heteromultimeric cytoplasmic complex with HSP90AA1, HSPA1A/HSPA1B, and FKBP5 or another immunophilin such as PPID, STIP1, or the immunophilin homolog PPP5C. Upon ligand binding FKBP5 dissociates from the complex and FKBP4 takes its place, thereby linking the complex to dynein and mediating transport to the nucleus, where the complex dissociates. Directly interacts with UNC45A. Binds to DNA as a homodimer, and as heterodimer with NR3C2 or the retinoid X receptor. Binds STAT5A and STAT5B homodimers and heterodimers. Interacts with NRIP1, POU2F1, POU2F2 and TRIM28. Interacts with several coactivator complexes, including the SMARCA4 complex, CREBBP/EP300, TADA2L (Ada complex) and p160 coactivators such as NCOA2 and NCOA6. Interaction with BAG1 inhibits transactivation. Interacts with HEXIM1, PELP1 and TGFB1I1. Interacts with NCOA1, NCOA3, SMARCA4, SMARCC1, SMARCD1, and SMARCE1. In terms of processing, phosphorylated in the absence of hormone; becomes hyperphosphorylated in the presence of glucocorticoids. May be dephosphorylated by PPP5C, attenuates NR3C1 action. As to expression, isoform 1 is expressed in all tissues tested including liver, gills, intestine, skeletal muscle, kidney, heart, spleen, stomach, brain, pituitary, ovary, testis, skin and bladder. Isoform 2 is found only in testis.

The protein resides in the cytoplasm. It localises to the nucleus. Its subcellular location is the mitochondrion. The protein localises to the cytoskeleton. It is found in the spindle. The protein resides in the microtubule organizing center. It localises to the centrosome. Its function is as follows. Receptor for glucocorticoids (GC). Has a dual mode of action: as a transcription factor that binds to glucocorticoid response elements (GRE), both for nuclear and mitochondrial DNA, and as a modulator of other transcription factors. Affects inflammatory responses, cellular proliferation and differentiation in target tissues. Involved in chromatin remodeling. Plays a role in rapid mRNA degradation by binding to the 5' UTR of target mRNAs and interacting with PNRC2 in a ligand-dependent manner which recruits the RNA helicase UPF1 and the mRNA-decapping enzyme DCP1A, leading to RNA decay. Could act as a coactivator for STAT5-dependent transcription upon growth hormone (GH) stimulation and could reveal an essential role of hepatic GR in the control of body growth. Mediates glucocorticoid-induced apoptosis. Promotes accurate chromosome segregation during mitosis. May act as a tumor suppressor. May play a negative role in adipogenesis through the regulation of lipolytic and antilipogenic gene expression. The polypeptide is Glucocorticoid receptor (nr3c1) (Oncorhynchus mykiss (Rainbow trout)).